The sequence spans 259 residues: 5'-nucleotidase SurE (259 aa).

A divalent metal cation contacts are provided by Asp-8, Asp-9, Ser-39, and Asn-93.

This sequence belongs to the SurE nucleotidase family. A divalent metal cation serves as cofactor.

The protein resides in the cytoplasm. The catalysed reaction is a ribonucleoside 5'-phosphate + H2O = a ribonucleoside + phosphate. Functionally, nucleotidase that shows phosphatase activity on nucleoside 5'-monophosphates. The sequence is that of 5'-nucleotidase SurE from Thermococcus kodakarensis (strain ATCC BAA-918 / JCM 12380 / KOD1) (Pyrococcus kodakaraensis (strain KOD1)).